Reading from the N-terminus, the 679-residue chain is Peptidoglycan D,D-transpeptidase FtsI homolog (679 aa).

A helical transmembrane segment spans residues Val-13–Tyr-33. Residue Ser-292 is the Acyl-ester intermediate of the active site.

It belongs to the transpeptidase family.

Its subcellular location is the plastid. It localises to the chloroplast membrane. The enzyme catalyses Preferential cleavage: (Ac)2-L-Lys-D-Ala-|-D-Ala. Also transpeptidation of peptidyl-alanyl moieties that are N-acyl substituents of D-alanine.. The polypeptide is Peptidoglycan D,D-transpeptidase FtsI homolog (ftsI) (Chlorokybus atmophyticus (Soil alga)).